Reading from the N-terminus, the 372-residue chain is Aminomethyltransferase (372 aa).

Belongs to the GcvT family. In terms of assembly, the glycine cleavage system is composed of four proteins: P, T, L and H.

The catalysed reaction is N(6)-[(R)-S(8)-aminomethyldihydrolipoyl]-L-lysyl-[protein] + (6S)-5,6,7,8-tetrahydrofolate = N(6)-[(R)-dihydrolipoyl]-L-lysyl-[protein] + (6R)-5,10-methylene-5,6,7,8-tetrahydrofolate + NH4(+). Its function is as follows. The glycine cleavage system catalyzes the degradation of glycine. In Burkholderia ambifaria (strain MC40-6), this protein is Aminomethyltransferase.